The chain runs to 62 residues: MATKIKFKYKGQDLEVDISKVKKVWKVGKMVSFTYDDNGKTGRGAVSEKDAPKELLSMIGKK.

It belongs to the 7 kDa DNA-binding/endoribonuclease P2 family. As to quaternary structure, monomer.

It localises to the cytoplasm. Its function is as follows. Can constrain negative DNA supercoils. May be involved in maintaining the integrity of the genome at high temperature. The polypeptide is DNA-binding protein 7 (Metallosphaera cuprina (strain Ar-4)).